Consider the following 222-residue polypeptide: uncharacterized protein (222 aa).

This is an uncharacterized protein from Homo sapiens (Human).